Reading from the N-terminus, the 506-residue chain is Glutamate--tRNA ligase (506 aa).

The 'HIGH' region signature appears at P21–M31. The short motif at K265–R269 is the 'KMSKS' region element. An ATP-binding site is contributed by K268.

Belongs to the class-I aminoacyl-tRNA synthetase family. Glutamate--tRNA ligase type 1 subfamily. In terms of assembly, monomer.

It localises to the cytoplasm. The catalysed reaction is tRNA(Glu) + L-glutamate + ATP = L-glutamyl-tRNA(Glu) + AMP + diphosphate. In terms of biological role, catalyzes the attachment of glutamate to tRNA(Glu) in a two-step reaction: glutamate is first activated by ATP to form Glu-AMP and then transferred to the acceptor end of tRNA(Glu). This chain is Glutamate--tRNA ligase, found in Bifidobacterium adolescentis (strain ATCC 15703 / DSM 20083 / NCTC 11814 / E194a).